The chain runs to 82 residues: Sulfur carrier protein TusA (82 aa).

The active-site Cysteine persulfide intermediate is Cys19.

Belongs to the sulfur carrier protein TusA family. In terms of assembly, interacts with IscS.

Its subcellular location is the cytoplasm. It participates in tRNA modification. Functionally, sulfur carrier protein involved in sulfur trafficking in the cell. Part of a sulfur-relay system required for 2-thiolation during synthesis of 2-thiouridine of the modified wobble base 5-methylaminomethyl-2-thiouridine (mnm(5)s(2)U) in tRNA. Interacts with IscS and stimulates its cysteine desulfurase activity. Accepts an activated sulfur from IscS, which is then transferred to TusD, and thus determines the direction of sulfur flow from IscS to 2-thiouridine formation. Also appears to be involved in sulfur transfer for the biosynthesis of molybdopterin. This chain is Sulfur carrier protein TusA, found in Edwardsiella ictaluri (strain 93-146).